The chain runs to 523 residues: L-tyrosine:2-oxoglutarate aminotransferase ucdG (523 aa).

It belongs to the class-I pyridoxal-phosphate-dependent aminotransferase family. Homodimer. Requires pyridoxal 5'-phosphate as cofactor.

The protein localises to the cytoplasm. The enzyme catalyses L-tyrosine + 2-oxoglutarate = 3-(4-hydroxyphenyl)pyruvate + L-glutamate. Its pathway is secondary metabolite biosynthesis. Its function is as follows. Nonribosomal peptide synthetase that mediates the biosynthesis of usterphenyllins and uscandidusins, p-terphenyl derivatives. Within the pathway, ucdG is probably involved in the conversion of L-tyrosine into 4-hydroxyphenylpyruvate (HPPA) as a precursor for the usterphenyllin and uscandidusin biosynthesis. UcdE further prenylates position C-14 of ring C of usterphenyllin B to form usterphenyllin A. The pathway begin with the biosynthesis of 4-hydroxyphenylpyruvate (HPPA) from L-tyrosine, possibly by the aminotransferase ucdG. The nonribosomal peptide synthetase ucdA then condenses two HPPA units to produce atromentin. The key step in this pathway is the reduction and dehydration of atromentin to form a terphenyl triol intermediate, performed by the NAD-dependent dehydrogenase ucdB. Further O-methylation by the methyltransferase ucdC forms terphenyllin carrying two methoxy moieties at C-9 and C-12, and subsequent dihydroxylation at C-3 of ring A and C-15 of ring C by the flavin-dependent oxygenase ucdD leads to 3,15-dihydroxyterphenyllin. Prenylation by ucdE at position C-5 of ring A forms usterphenyllin B, and is followed by a second prenylation at position C-14 of ring C to form usterphenyllin A. The following furan ring formation that leads to uscandidusins A and B was proven to be an unexpected spontaneous non-enzymatic reaction. This chain is L-tyrosine:2-oxoglutarate aminotransferase ucdG, found in Aspergillus ustus.